A 102-amino-acid polypeptide reads, in one-letter code: Small ribosomal subunit protein uS10 (102 aa).

This sequence belongs to the universal ribosomal protein uS10 family. As to quaternary structure, part of the 30S ribosomal subunit.

In terms of biological role, involved in the binding of tRNA to the ribosomes. This is Small ribosomal subunit protein uS10 from Enterococcus faecalis (strain ATCC 700802 / V583).